The primary structure comprises 517 residues: Beta-glucosidase 17 (517 aa).

The signal sequence occupies residues 1–23; that stretch reads MAIKSIFIIIIISIITSISELYA. Residues Gln54, His158, and 203–204 contribute to the a beta-D-glucoside site; that span reads NE. Glu204 functions as the Proton donor in the catalytic mechanism. Cys223 and Cys230 form a disulfide bridge. Asn229 is a glycosylation site (N-linked (GlcNAc...) asparagine). An a beta-D-glucoside-binding site is contributed by Tyr346. N-linked (GlcNAc...) asparagine glycosylation is found at Asn361 and Asn371. A beta-D-glucoside contacts are provided by residues Glu417, Trp466, 473–474, and Tyr482; that span reads EW. Catalysis depends on Glu417, which acts as the Nucleophile. Asn510 carries N-linked (GlcNAc...) asparagine glycosylation.

Belongs to the glycosyl hydrolase 1 family.

The enzyme catalyses Hydrolysis of terminal, non-reducing beta-D-glucosyl residues with release of beta-D-glucose.. The chain is Beta-glucosidase 17 from Arabidopsis thaliana (Mouse-ear cress).